Here is a 496-residue protein sequence, read N- to C-terminus: Angiopoietin-2 (496 aa).

A signal peptide spans 1–18 (MWQIIFLTFGWDLVLASA). Asn89, Asn119, Asn133, Asn151, Asn240, and Asn304 each carry an N-linked (GlcNAc...) asparagine glycan. The stretch at 159-256 (QLLQHSISTN…QQHDLMETVN (98 aa)) forms a coiled coil. The Fibrinogen C-terminal domain maps to 275–495 (KEEQTTFRDC…ATTMMIRPAD (221 aa)). The cysteines at positions 284 and 313 are disulfide-linked. Ca(2+) is bound by residues Asp429, Asp431, Cys433, and Cys435. 2 disulfide bridges follow: Cys433-Cys435 and Cys437-Cys450.

In terms of assembly, interacts with TEK/TIE2, competing for the same binding site as ANGPT1. Interacts with ITGA5. Interacts with SVEP1/polydom. Interacts with THBD; this interaction significantly inhibits the generation of activated PC and TAFIa/CPB2 by the thrombin/thrombomodulin complex. As to expression, expressed in the ovary, uterus and placenta.

It is found in the secreted. Binds to TEK/TIE2, competing for the ANGPT1 binding site, and modulating ANGPT1 signaling. Can induce tyrosine phosphorylation of TEK/TIE2 in the absence of ANGPT1. In the absence of angiogenic inducers, such as VEGF, ANGPT2-mediated loosening of cell-matrix contacts may induce endothelial cell apoptosis with consequent vascular regression. In concert with VEGF, it may facilitate endothelial cell migration and proliferation, thus serving as a permissive angiogenic signal. Involved in the regulation of lymphangiogenesis. This chain is Angiopoietin-2 (Angpt2), found in Mus musculus (Mouse).